The sequence spans 413 residues: Multifunctional CCA protein (413 aa).

Residues Gly-8 and Arg-11 each contribute to the ATP site. 2 residues coordinate CTP: Gly-8 and Arg-11. Residues Asp-21 and Asp-23 each contribute to the Mg(2+) site. 3 residues coordinate ATP: Arg-91, Arg-143, and Arg-146. Positions 91, 143, and 146 each coordinate CTP. An HD domain is found at 232-333 (TGVHVMMVVD…VRFFERSDAL (102 aa)).

This sequence belongs to the tRNA nucleotidyltransferase/poly(A) polymerase family. Bacterial CCA-adding enzyme type 1 subfamily. Monomer. Can also form homodimers and oligomers. The cofactor is Mg(2+). Requires Ni(2+) as cofactor.

The enzyme catalyses a tRNA precursor + 2 CTP + ATP = a tRNA with a 3' CCA end + 3 diphosphate. It catalyses the reaction a tRNA with a 3' CCA end + 2 CTP + ATP = a tRNA with a 3' CCACCA end + 3 diphosphate. Catalyzes the addition and repair of the essential 3'-terminal CCA sequence in tRNAs without using a nucleic acid template. Adds these three nucleotides in the order of C, C, and A to the tRNA nucleotide-73, using CTP and ATP as substrates and producing inorganic pyrophosphate. tRNA 3'-terminal CCA addition is required both for tRNA processing and repair. Also involved in tRNA surveillance by mediating tandem CCA addition to generate a CCACCA at the 3' terminus of unstable tRNAs. While stable tRNAs receive only 3'-terminal CCA, unstable tRNAs are marked with CCACCA and rapidly degraded. The chain is Multifunctional CCA protein from Burkholderia ambifaria (strain MC40-6).